Consider the following 383-residue polypeptide: 1-deoxy-D-xylulose 5-phosphate reductoisomerase (383 aa).

Thr-10, Gly-11, Ser-12, Ile-13, Asn-38, and Asn-121 together coordinate NADPH. Lys-122 is a binding site for 1-deoxy-D-xylulose 5-phosphate. Glu-123 provides a ligand contact to NADPH. Residue Asp-147 participates in Mn(2+) binding. 4 residues coordinate 1-deoxy-D-xylulose 5-phosphate: Ser-148, Glu-149, Ser-172, and His-195. Glu-149 contributes to the Mn(2+) binding site. Gly-201 lines the NADPH pocket. 1-deoxy-D-xylulose 5-phosphate is bound by residues Ser-208, Asn-213, Lys-214, and Glu-217. Residue Glu-217 coordinates Mn(2+).

It belongs to the DXR family. It depends on Mg(2+) as a cofactor. Requires Mn(2+) as cofactor.

It carries out the reaction 2-C-methyl-D-erythritol 4-phosphate + NADP(+) = 1-deoxy-D-xylulose 5-phosphate + NADPH + H(+). The protein operates within isoprenoid biosynthesis; isopentenyl diphosphate biosynthesis via DXP pathway; isopentenyl diphosphate from 1-deoxy-D-xylulose 5-phosphate: step 1/6. Functionally, catalyzes the NADPH-dependent rearrangement and reduction of 1-deoxy-D-xylulose-5-phosphate (DXP) to 2-C-methyl-D-erythritol 4-phosphate (MEP). This is 1-deoxy-D-xylulose 5-phosphate reductoisomerase from Ruthia magnifica subsp. Calyptogena magnifica.